Reading from the N-terminus, the 286-residue chain is 4-hydroxy-3-methylbut-2-enyl diphosphate reductase (286 aa).

A [4Fe-4S] cluster-binding site is contributed by Cys-12. (2E)-4-hydroxy-3-methylbut-2-enyl diphosphate is bound by residues His-46 and His-79. 2 residues coordinate dimethylallyl diphosphate: His-46 and His-79. Residues His-46 and His-79 each contribute to the isopentenyl diphosphate site. A [4Fe-4S] cluster-binding site is contributed by Cys-101. Residue His-129 coordinates (2E)-4-hydroxy-3-methylbut-2-enyl diphosphate. His-129 contributes to the dimethylallyl diphosphate binding site. An isopentenyl diphosphate-binding site is contributed by His-129. Catalysis depends on Glu-131, which acts as the Proton donor. Residue Thr-169 coordinates (2E)-4-hydroxy-3-methylbut-2-enyl diphosphate. Cys-198 contributes to the [4Fe-4S] cluster binding site. (2E)-4-hydroxy-3-methylbut-2-enyl diphosphate contacts are provided by Ser-226, Asn-228, and Ser-270. Residues Ser-226, Asn-228, and Ser-270 each contribute to the dimethylallyl diphosphate site. 3 residues coordinate isopentenyl diphosphate: Ser-226, Asn-228, and Ser-270.

This sequence belongs to the IspH family. It depends on [4Fe-4S] cluster as a cofactor.

It catalyses the reaction isopentenyl diphosphate + 2 oxidized [2Fe-2S]-[ferredoxin] + H2O = (2E)-4-hydroxy-3-methylbut-2-enyl diphosphate + 2 reduced [2Fe-2S]-[ferredoxin] + 2 H(+). The catalysed reaction is dimethylallyl diphosphate + 2 oxidized [2Fe-2S]-[ferredoxin] + H2O = (2E)-4-hydroxy-3-methylbut-2-enyl diphosphate + 2 reduced [2Fe-2S]-[ferredoxin] + 2 H(+). It functions in the pathway isoprenoid biosynthesis; dimethylallyl diphosphate biosynthesis; dimethylallyl diphosphate from (2E)-4-hydroxy-3-methylbutenyl diphosphate: step 1/1. The protein operates within isoprenoid biosynthesis; isopentenyl diphosphate biosynthesis via DXP pathway; isopentenyl diphosphate from 1-deoxy-D-xylulose 5-phosphate: step 6/6. Functionally, catalyzes the conversion of 1-hydroxy-2-methyl-2-(E)-butenyl 4-diphosphate (HMBPP) into a mixture of isopentenyl diphosphate (IPP) and dimethylallyl diphosphate (DMAPP). Acts in the terminal step of the DOXP/MEP pathway for isoprenoid precursor biosynthesis. The chain is 4-hydroxy-3-methylbut-2-enyl diphosphate reductase from Solidesulfovibrio magneticus (strain ATCC 700980 / DSM 13731 / RS-1) (Desulfovibrio magneticus).